Reading from the N-terminus, the 173-residue chain is Adenine phosphoribosyltransferase (173 aa).

Belongs to the purine/pyrimidine phosphoribosyltransferase family. In terms of assembly, homodimer.

It localises to the cytoplasm. The catalysed reaction is AMP + diphosphate = 5-phospho-alpha-D-ribose 1-diphosphate + adenine. It participates in purine metabolism; AMP biosynthesis via salvage pathway; AMP from adenine: step 1/1. Catalyzes a salvage reaction resulting in the formation of AMP, that is energically less costly than de novo synthesis. In Macrococcus caseolyticus (strain JCSC5402) (Macrococcoides caseolyticum), this protein is Adenine phosphoribosyltransferase.